The sequence spans 349 residues: Ion-translocating oxidoreductase complex subunit D (349 aa).

Helical transmembrane passes span 36–56, 77–99, and 124–144; these read CAFFGWGTLIQVLLAIIVALS, SAMLTAILIGVAIPPLAPWWMIV, and AMAAYVLLLVSFPVQMTSWIA. Thr-185 is modified (FMN phosphoryl threonine). The next 5 membrane-spanning stretches (helical) occupy residues 212–232, 239–259, 265–285, 291–311, and 315–335; these read GTGVGWFWVNLAYLAGGLVLL, WHISTGVLAGLFVASSIGFLL, ASPLFHLFSGATMLAAFFIAT, ATSPRGRLIFGALIGVLVYII, and GGYPDAFAFAVLLANLCAPFI.

Belongs to the NqrB/RnfD family. The complex is composed of six subunits: RnfA, RnfB, RnfC, RnfD, RnfE and RnfG. Requires FMN as cofactor.

Its subcellular location is the cell inner membrane. Functionally, part of a membrane-bound complex that couples electron transfer with translocation of ions across the membrane. The polypeptide is Ion-translocating oxidoreductase complex subunit D (Shewanella sp. (strain ANA-3)).